We begin with the raw amino-acid sequence, 139 residues long: Gas vesicle protein A (139 aa).

Residues 113–139 (EKLGDMLTSDEPEPRKATRVRSRRADR) are disordered. Residues 129–139 (ATRVRSRRADR) are compositionally biased toward basic residues.

The protein belongs to the gas vesicle GvpA family. As to quaternary structure, the gas vesicle shell is 2 nm thick and consists of a single layer of this protein. It forms helical ribs nearly perpendicular to the long axis of the vesicle.

It is found in the gas vesicle shell. Gas vesicles are hollow, gas filled proteinaceous nanostructures found in some microorganisms. During planktonic growth they allow positioning of the organism at a favorable depth for light or nutrient acquisition. GvpA forms the protein shell. This is Gas vesicle protein A from Mycobacterium sp. (strain JLS).